We begin with the raw amino-acid sequence, 191 residues long: Rubrerythrin (191 aa).

Residues 1-146 form the Ferritin-like diiron domain; it reads MKSLKGSRTE…DFARNIKEGR (146 aa). 10 residues coordinate Fe(3+): glutamate 20, glutamate 53, glutamate 94, glutamate 97, glutamate 128, histidine 131, cysteine 158, cysteine 161, cysteine 174, and cysteine 177. The Rubredoxin-like domain occupies 153 to 191; it reads ATKWRCRNCGYVHEGTGAPELCPACAHPKAHFELLGINW.

In terms of assembly, homodimer. Possesses two rubredoxin-like centers and two non-sulfur oxo-bridged di-iron centers per dimer. Requires Fe(3+) as cofactor.

The protein resides in the cytoplasm. In terms of biological role, may provide oxidative stress protection via catalytic reduction of intracellular hydrogen peroxide. The sequence is that of Rubrerythrin (rbr) from Nitratidesulfovibrio vulgaris (strain ATCC 29579 / DSM 644 / CCUG 34227 / NCIMB 8303 / VKM B-1760 / Hildenborough) (Desulfovibrio vulgaris).